The primary structure comprises 357 residues: bZIP transcription factor 23 (357 aa).

The segment at 166–185 (PPVPPAPTPTAAAVPPPPPP) is disordered. The bZIP domain occupies 275 to 338 (VERRQRRMIK…KNEVLERMSR (64 aa)). A basic motif region spans residues 277 to 296 (RRQRRMIKNRESAARSRQRK). The leucine-zipper stretch occupies residues 303–317 (LEAEVAKLKELNDEL).

The protein belongs to the bZIP family. ABI5 subfamily. As to expression, highly expressed in leaves.

It localises to the nucleus. Transcriptional activator that mediates abscisic acid (ABA) signaling. Can regulate the expression of a wide spectrum of stress-related genes in response to abiotic stresses through an ABA-dependent regulation pathway. Confers ABA-dependent drought and salinity tolerance. Binds specifically to the ABA-responsive elements (ABRE) in the promoter of target genes to mediate stress-responsive ABA signaling. In Oryza sativa subsp. japonica (Rice), this protein is bZIP transcription factor 23.